The following is a 551-amino-acid chain: Adenine deaminase (551 aa).

Belongs to the metallo-dependent hydrolases superfamily. Adenine deaminase family. Mn(2+) serves as cofactor.

The enzyme catalyses adenine + H2O + H(+) = hypoxanthine + NH4(+). The protein is Adenine deaminase of Leuconostoc citreum (strain KM20).